We begin with the raw amino-acid sequence, 503 residues long: Aromatase (503 aa).

Helical transmembrane passes span 19 to 39 (EVMP…FFVW) and 51 to 71 (GYCM…MGLG). The segment at 294 to 324 (ENVNQCILEMMIAAPDTLSVTVFFMLCLIAQ) is substrate-binding pocket. Residues D309 and M374 each coordinate substrate. Heme is bound at residue C437.

This sequence belongs to the cytochrome P450 family. Heme serves as cofactor. As to expression, expressed in placenta. Highly expressed in follicles (0 hour:hCG), followed by a drop (12-24 hour:hCG) and by an increase (30-39 hour:hCG). Highly expressed in corpora lutea. Also expressed in granulosa cell layer. Not expressed in theca interna.

It is found in the endoplasmic reticulum membrane. It localises to the microsome membrane. The catalysed reaction is testosterone + 3 reduced [NADPH--hemoprotein reductase] + 3 O2 = 17beta-estradiol + formate + 3 oxidized [NADPH--hemoprotein reductase] + 4 H2O + 4 H(+). It carries out the reaction androst-4-ene-3,17-dione + 3 reduced [NADPH--hemoprotein reductase] + 3 O2 = estrone + formate + 3 oxidized [NADPH--hemoprotein reductase] + 4 H2O + 4 H(+). The enzyme catalyses androst-4-ene-3,17-dione + reduced [NADPH--hemoprotein reductase] + O2 = 19-hydroxyandrost-4-ene-3,17-dione + oxidized [NADPH--hemoprotein reductase] + H2O + H(+). It catalyses the reaction 19-hydroxyandrost-4-ene-3,17-dione + reduced [NADPH--hemoprotein reductase] + O2 = 19-oxo-androst-4-ene-3,17-dione + oxidized [NADPH--hemoprotein reductase] + 2 H2O + H(+). The catalysed reaction is 19-oxo-androst-4-ene-3,17-dione + reduced [NADPH--hemoprotein reductase] + O2 = estrone + formate + oxidized [NADPH--hemoprotein reductase] + H2O + 2 H(+). It carries out the reaction estrone + reduced [NADPH--hemoprotein reductase] + O2 = 2-hydroxyestrone + oxidized [NADPH--hemoprotein reductase] + H2O + H(+). The enzyme catalyses 17beta-hydroxy-5alpha-androstan-3-one + reduced [NADPH--hemoprotein reductase] + O2 = 17beta,19-dihydroxy-3-oxo-5alpha-androstanone + oxidized [NADPH--hemoprotein reductase] + H2O + H(+). It catalyses the reaction 17beta,19-dihydroxy-3-oxo-5alpha-androstanone + reduced [NADPH--hemoprotein reductase] + O2 = 17beta-hydroxy-3,19-dioxo-5alpha-androstanone + oxidized [NADPH--hemoprotein reductase] + 2 H2O + H(+). The catalysed reaction is 17beta-hydroxy-3,19-dioxo-5alpha-androstanone + reduced [NADPH--hemoprotein reductase] + O2 = 17beta-hydroxy-3-oxo-19-nor-5alpha-androst-1-ene + formate + oxidized [NADPH--hemoprotein reductase] + H2O + 2 H(+). The protein operates within steroid hormone biosynthesis. A cytochrome P450 monooxygenase that catalyzes the conversion of C19 androgens, androst-4-ene-3,17-dione (androstenedione) and testosterone to the C18 estrogens, estrone and estradiol, respectively. Catalyzes three successive oxidations of C19 androgens: two conventional oxidations at C19 yielding 19-hydroxy and 19-oxo/19-aldehyde derivatives, followed by a third oxidative aromatization step that involves C1-beta hydrogen abstraction combined with cleavage of the C10-C19 bond to yield a phenolic A ring and formic acid. Alternatively, the third oxidative reaction yields a 19-norsteroid and formic acid. Converts dihydrotestosterone to delta1,10-dehydro 19-nordihydrotestosterone and may play a role in homeostasis of this potent androgen. Also displays 2-hydroxylase activity toward estrone. Mechanistically, uses molecular oxygen inserting one oxygen atom into a substrate, and reducing the second into a water molecule, with two electrons provided by NADPH via cytochrome P450 reductase (CPR; NADPH-ferrihemoprotein reductase). The polypeptide is Aromatase (CYP19A1) (Equus caballus (Horse)).